A 369-amino-acid chain; its full sequence is Endoglucanase (369 aa).

The signal sequence occupies residues 1–22; it reads MMTMLRGWITMIVMLTAINAQA. The Proton donor role is filled by E56. D117 serves as the catalytic Nucleophile.

Belongs to the glycosyl hydrolase 8 (cellulase D) family.

It localises to the secreted. The catalysed reaction is Endohydrolysis of (1-&gt;4)-beta-D-glucosidic linkages in cellulose, lichenin and cereal beta-D-glucans.. It functions in the pathway glycan metabolism; bacterial cellulose biosynthesis. Hydrolyzes carboxymethylcellulose. In Salmonella typhi, this protein is Endoglucanase (bcsZ).